The following is a 414-amino-acid chain: MTQANLSETLFKPRFKHPETSTLVRRFSHGAQLPVQSALDGKTIPHWYRMINRLMWIWRGIDPREILDVQARIVMSDAERTDDDLYDTVIGYRGGNWIYEWATQAMVWQQKACAEEDPQLSGRHWLHAATLYNIAAYPHLKGDDLAEQAQALSNRAYEEAAQRLPGTMRQMEFTVPGGAPITGFLHMPKGDGPFPTVLMCGGLDAMQTDYYSLYERYFAPRGIAMLTIDMPSVGFSSKWKLTQDSSLLHQHVLKALPNVPWVDHTRVAAFGFRFGANVAVRLAYLESPRLKVVACLGPVVHTLLSDFKCQQQVPEMYLDVLASRLGMHDASDEALRVELNRYSLKVQGLLGRRCPTPMLSGYWKNDPFSPEEDSRLITSSSADGKLLEIPFNPVYRNFDKGLQEITDWIEKRLC.

Belongs to the FrsA family.

It carries out the reaction a carboxylic ester + H2O = an alcohol + a carboxylate + H(+). Its function is as follows. Catalyzes the hydrolysis of esters. This Escherichia coli O81 (strain ED1a) protein is Esterase FrsA.